The primary structure comprises 118 residues: MARVKRGVVARARHKKILKQAKGYYGARSRVYRVAFQAVIKAGQYAYRDRRQRKRQFRQLWIARINAAARQNGISYSKFINGLKKASVEIDRKILADIAVFDKLAFTALVEKAKAALA.

Belongs to the bacterial ribosomal protein bL20 family.

Its function is as follows. Binds directly to 23S ribosomal RNA and is necessary for the in vitro assembly process of the 50S ribosomal subunit. It is not involved in the protein synthesizing functions of that subunit. This is Large ribosomal subunit protein bL20 from Enterobacter sp. (strain 638).